The chain runs to 179 residues: Translation initiation factor IF-3 (179 aa).

It belongs to the IF-3 family. Monomer.

It is found in the cytoplasm. Functionally, IF-3 binds to the 30S ribosomal subunit and shifts the equilibrium between 70S ribosomes and their 50S and 30S subunits in favor of the free subunits, thus enhancing the availability of 30S subunits on which protein synthesis initiation begins. This Leptospira interrogans serogroup Icterohaemorrhagiae serovar copenhageni (strain Fiocruz L1-130) protein is Translation initiation factor IF-3.